The following is a 173-amino-acid chain: Glycine cleavage system H protein, mitochondrial (173 aa).

The N-terminal 48 residues, 1–48, are a transit peptide targeting the mitochondrion; sequence MALRVVRSVRALLCTLRAVPSPAAPCPPRPWQLGVGAVRTLRTGPALL. One can recognise a Lipoyl-binding domain in the interval 66-148; the sequence is IGTVGISNFA…YEDGWLIKMT (83 aa). K107 carries the N6-lipoyllysine modification.

Belongs to the GcvH family. In terms of assembly, interacts with GLDC. The glycine cleavage system is composed of four proteins: P (GLDC), T (GCST), L (DLD) and H (GCSH). It depends on (R)-lipoate as a cofactor.

It is found in the mitochondrion. The glycine cleavage system catalyzes the degradation of glycine. The H protein (GCSH) shuttles the methylamine group of glycine from the P protein (GLDC) to the T protein (GCST). Has a pivotal role in the lipoylation of enzymes involved in cellular energetics such as the mitochondrial dihydrolipoyllysine-residue acetyltransferase component of pyruvate dehydrogenase complex (DLAT), and the mitochondrial dihydrolipoyllysine-residue succinyltransferase component of 2-oxoglutarate dehydrogenase complex (DLST). The sequence is that of Glycine cleavage system H protein, mitochondrial from Homo sapiens (Human).